The primary structure comprises 470 residues: Chromosomal replication initiator protein DnaA (470 aa).

Positions 1–68 (MENFWSLCLG…SALAEEVLST (68 aa)) are domain I, interacts with DnaA modulators. A domain II region spans residues 68 to 133 (TPVQIELALY…KKPKTLTETS (66 aa)). The segment at 134-350 (GLNPAFRFDN…GALNRIIAMA (217 aa)) is domain III, AAA+ region. ATP contacts are provided by Gly-178, Gly-180, Lys-181, and Thr-182. The interval 351–470 (NFTGHAIDVS…IAVLIQVIRD (120 aa)) is domain IV, binds dsDNA.

The protein belongs to the DnaA family. As to quaternary structure, oligomerizes as a right-handed, spiral filament on DNA at oriC.

The protein resides in the cytoplasm. Its function is as follows. Plays an essential role in the initiation and regulation of chromosomal replication. ATP-DnaA binds to the origin of replication (oriC) to initiate formation of the DNA replication initiation complex once per cell cycle. Binds the DnaA box (a 9 base pair repeat at the origin) and separates the double-stranded (ds)DNA. Forms a right-handed helical filament on oriC DNA; dsDNA binds to the exterior of the filament while single-stranded (ss)DNA is stabiized in the filament's interior. The ATP-DnaA-oriC complex binds and stabilizes one strand of the AT-rich DNA unwinding element (DUE), permitting loading of DNA polymerase. After initiation quickly degrades to an ADP-DnaA complex that is not apt for DNA replication. Binds acidic phospholipids. This Methylobacillus flagellatus (strain ATCC 51484 / DSM 6875 / VKM B-1610 / KT) protein is Chromosomal replication initiator protein DnaA.